Here is a 274-residue protein sequence, read N- to C-terminus: Large ribosomal subunit protein uL2 (274 aa).

The interval 224–254 (AMNPVDHPHGGGEGRTGEGQAPVSPWNTLTK) is disordered. The span at 229–239 (DHPHGGGEGRT) shows a compositional bias: basic and acidic residues.

It belongs to the universal ribosomal protein uL2 family. As to quaternary structure, part of the 50S ribosomal subunit. Forms a bridge to the 30S subunit in the 70S ribosome.

One of the primary rRNA binding proteins. Required for association of the 30S and 50S subunits to form the 70S ribosome, for tRNA binding and peptide bond formation. It has been suggested to have peptidyltransferase activity; this is somewhat controversial. Makes several contacts with the 16S rRNA in the 70S ribosome. This is Large ribosomal subunit protein uL2 from Leptothrix cholodnii (strain ATCC 51168 / LMG 8142 / SP-6) (Leptothrix discophora (strain SP-6)).